The chain runs to 410 residues: Chlorobenzene dioxygenase, ferredoxin reductase component (410 aa).

4–35 (HVAIIGNGVAGFTTAQALRAEGFEGRISLIGN) serves as a coordination point for FAD. 145–173 (RLVIAGGGLIGCEVATTARKLGLAVTILE) is an NAD(+) binding site.

It belongs to the bacterial ring-hydroxylating dioxygenase ferredoxin reductase family. In terms of assembly, this dioxygenase system consists of four proteins: the two subunits of the oxygenase component (TecA1 and TecA2), a ferredoxin (TecA3) and a ferredoxin reductase (TecA4). The cofactor is FAD.

It carries out the reaction 2 reduced [2Fe-2S]-[ferredoxin] + NAD(+) + H(+) = 2 oxidized [2Fe-2S]-[ferredoxin] + NADH. The protein operates within aromatic compound metabolism. In terms of biological role, part of the chlorobenzene dioxygenase system that catalyzes the dihydroxylation of a range of aromatic compounds, including chlorinated benzenes and toluenes, and dinuclear aromatics such as biphenyl and dibenzo-p-dioxin. The chain is Chlorobenzene dioxygenase, ferredoxin reductase component from Cupriavidus sp. (strain PS12).